The sequence spans 405 residues: Elongation factor Tu (405 aa).

The tr-type G domain occupies 10 to 213; sequence KEHVNVGTIG…AMDEYIPTPQ (204 aa). Residues 19 to 26 are G1; the sequence is GHVDHGKS. 19–26 contacts GTP; sequence GHVDHGKS. Ser-26 provides a ligand contact to Mg(2+). Residues 64–68 are G2; it reads GITIN. The segment at 85–88 is G3; the sequence is DCPG. Residues 85 to 89 and 140 to 143 each bind GTP; these read DCPGH and NKCD. Residues 140-143 form a G4 region; sequence NKCD. The tract at residues 178–180 is G5; the sequence is SAL.

It belongs to the TRAFAC class translation factor GTPase superfamily. Classic translation factor GTPase family. EF-Tu/EF-1A subfamily. Monomer.

It localises to the cytoplasm. The catalysed reaction is GTP + H2O = GDP + phosphate + H(+). GTP hydrolase that promotes the GTP-dependent binding of aminoacyl-tRNA to the A-site of ribosomes during protein biosynthesis. This is Elongation factor Tu from Aquifex aeolicus (strain VF5).